Consider the following 584-residue polypeptide: Transcription factor COE1 (584 aa).

Met-1 is subject to N-acetylmethionine. Residues 1-14 show a composition bias toward polar residues; that stretch reads MFGIQESIQRSGSS. Residues 1-21 form a disordered region; that stretch reads MFGIQESIQRSGSSMKEEPLG. Residue Lys-16 forms a Glycyl lysine isopeptide (Lys-Gly) (interchain with G-Cter in SUMO1); alternate linkage. Lys-16 is covalently cross-linked (Glycyl lysine isopeptide (Lys-Gly) (interchain with G-Cter in SUMO2); alternate). The interval 63 to 66 is interaction with DNA; it reads RKSN. A C5-type zinc finger spans residues 151 to 170; sequence CRVLLTHEIMCSRCCDKKSC. Interaction with DNA regions lie at residues 197-204 and 236-239; these read NCLKNAGN and NNSK. The region spanning 255–338 is the IPT/TIG domain; it reads PCIKAISPSE…KGTPGRFIYT (84 aa). The interval 450–473 is disordered; sequence GFTRNSSSVSPHGYVPSTTPQQTN.

It belongs to the COE family. As to quaternary structure, homodimer. Interacts with ZNF423 and ZNF521, leading to prevent EBF1 to bind DNA and activate target genes. Interacts with CCR4-NOT component CNOT3. Expressed exclusively in olfactory receptor neurons and their precursors.

It is found in the nucleus. Its function is as follows. Key pioneer transcription factor of B-cell specification and commitment. Recognizes variations of the palindromic sequence 5'-ATTCCCNNGGGAATT-3'. Operates in a transcription factor network to activate B-cell-specific genes and repress genes associated with alternative cell fates. For instance, positively regulates many B-cell specific genes including BCR or CD40 while repressing genes that direct cells into alternative lineages, including GATA3 and TCF7 for the T-cell lineage. In addition to its role during lymphopoiesis, controls the thermogenic gene program in adipocytes during development and in response to environmental cold. The polypeptide is Transcription factor COE1 (Ebf1) (Rattus norvegicus (Rat)).